Reading from the N-terminus, the 583-residue chain is Vivapain-1 (583 aa).

Residues Met1–Lys34 are Cytoplasmic-facing. Residues Met1 to Asp338 constitute a propeptide, activation peptide. The helical; Signal-anchor for type II membrane protein transmembrane segment at Ile35–Ala55 threads the bilayer. Topologically, residues Met56–Leu583 are lumenal. The segment covering Ser62–Pro82 has biased composition (polar residues). 2 disordered regions span residues Ser62 to Gly83 and Pro104 to Asn125. An N-linked (GlcNAc...) asparagine glycan is attached at Asn70. Positions Gly106 to Ala119 are enriched in basic and acidic residues. N-linked (GlcNAc...) asparagine glycans are attached at residues Asn195 and Asn272. 3 disulfide bridges follow: Cys360/Cys402, Cys395/Cys435, and Cys420/Cys440. Residue Cys363 is part of the active site. Residue Asn381 is glycosylated (N-linked (GlcNAc...) asparagine). N-linked (GlcNAc...) asparagine glycosylation is found at Asn486 and Asn494. A disulfide bridge connects residues Cys489 and Cys572. Catalysis depends on residues His495 and Asn547.

This sequence belongs to the peptidase C1 family.

The protein resides in the membrane. In terms of biological role, cysteine protease. The sequence is that of Vivapain-1 from Plasmodium vivax (strain Salvador I).